Consider the following 173-residue polypeptide: Large ribosomal subunit protein uL16 (173 aa).

It belongs to the universal ribosomal protein uL16 family.

The protein is Large ribosomal subunit protein uL16 of Methanococcus maripaludis (strain DSM 14266 / JCM 13030 / NBRC 101832 / S2 / LL).